The following is a 308-amino-acid chain: Porphobilinogen deaminase (308 aa).

S-(dipyrrolylmethanemethyl)cysteine is present on cysteine 241.

This sequence belongs to the HMBS family. Monomer. Dipyrromethane is required as a cofactor.

It catalyses the reaction 4 porphobilinogen + H2O = hydroxymethylbilane + 4 NH4(+). The protein operates within porphyrin-containing compound metabolism; protoporphyrin-IX biosynthesis; coproporphyrinogen-III from 5-aminolevulinate: step 2/4. Tetrapolymerization of the monopyrrole PBG into the hydroxymethylbilane pre-uroporphyrinogen in several discrete steps. The chain is Porphobilinogen deaminase from Staphylococcus aureus (strain bovine RF122 / ET3-1).